The primary structure comprises 643 residues: MVPSWPSTGCWRHLPVVLAALTLPWTATLAAAEKSAGDYFVHSLPGAPEGPLVKMHAGHIEVTPETNGNLFFWHFQNKHIANKQRTVIWLNGGPGCSSEDGALMEIGPYRLKDDKTLMYNDGAWNEFANVLFVDNPVGTGFSYVDTNAYVRELDEMAEQFVIFMEKWYKLFPEYEHDDLYFAGESYAGQYIPYIAKHVLARNKEAGTKQWNLKGLLIGNGWISPPEQYEAYLQFAFEKGLVKKGSDIASKLEVQLRICQKDLAVGESAVDHPECEKILQEILKLTATRGKDNKLECYNMYDVRLKDVYPSCGMNWPSDLANVQPYLRRKDVVQALHVNPNKVTGWVECDGRVGQNFNPVKSKPSIDLLPDILSEVPVMLFSGAEDLICNHLGTEALISRMAWNGGRGFELSPGTWAPRRDWTFEGEDAGFWQEARNLTYVVFYNASHMVPYDHPRRTRDMLDRFMGVDISSIGGDPTDSRLDGEKGPETTVGGTAGNGNADQEAEKAKLSAAKWEAYRRSGEIVLVIVAVAAAAWGYFVWRERRKRRGYQGLASAENGAAGGVMGGNSGFRNTHGGRPRSDVEAGDFDETQLDSLHVRSPVEGQEDARYSLGAVSDDDDEEEEGSAAGAKGKEKETGKAAESS.

Positions 1–30 (MVPSWPSTGCWRHLPVVLAALTLPWTATLA) are cleaved as a signal peptide. The Lumenal portion of the chain corresponds to 31 to 519 (AAEKSAGDYF…SAAKWEAYRR (489 aa)). Catalysis depends on residues Ser185 and Asp385. 2 N-linked (GlcNAc...) asparagine glycosylation sites follow: Asn436 and Asn444. Residue His447 is part of the active site. Positions 471 to 502 (SIGGDPTDSRLDGEKGPETTVGGTAGNGNADQ) are disordered. Over residues 477–487 (TDSRLDGEKGP) the composition is skewed to basic and acidic residues. Over residues 489–500 (TTVGGTAGNGNA) the composition is skewed to low complexity. A helical transmembrane segment spans residues 520 to 540 (SGEIVLVIVAVAAAAWGYFVW). Topologically, residues 541 to 643 (RERRKRRGYQ…KETGKAAESS (103 aa)) are cytoplasmic. Positions 556-643 (ENGAAGGVMG…KETGKAAESS (88 aa)) are disordered. A compositionally biased stretch (gly residues) spans 559 to 568 (AAGGVMGGNS). Acidic residues predominate over residues 615–624 (SDDDDEEEEG). A compositionally biased stretch (basic and acidic residues) spans 630 to 643 (KGKEKETGKAAESS).

Belongs to the peptidase S10 family.

It localises to the golgi apparatus. The protein localises to the trans-Golgi network membrane. The enzyme catalyses Preferential release of a C-terminal arginine or lysine residue.. Its function is as follows. Protease with a carboxypeptidase B-like function involved in the C-terminal processing of the lysine and arginine residues from protein precursors. Promotes cell fusion and is involved in the programmed cell death. The polypeptide is Pheromone-processing carboxypeptidase KEX1 (KEX1) (Chaetomium globosum (strain ATCC 6205 / CBS 148.51 / DSM 1962 / NBRC 6347 / NRRL 1970) (Soil fungus)).